The primary structure comprises 207 residues: Large ribosomal subunit protein uL4 (207 aa).

The tract at residues 49–78 (HAVKNRSAVSGGGRKPWRQKGTGRARQGSI) is disordered.

Belongs to the universal ribosomal protein uL4 family. As to quaternary structure, part of the 50S ribosomal subunit.

In terms of biological role, one of the primary rRNA binding proteins, this protein initially binds near the 5'-end of the 23S rRNA. It is important during the early stages of 50S assembly. It makes multiple contacts with different domains of the 23S rRNA in the assembled 50S subunit and ribosome. Functionally, forms part of the polypeptide exit tunnel. The chain is Large ribosomal subunit protein uL4 from Streptococcus suis (strain 98HAH33).